The primary structure comprises 213 residues: ATP phosphoribosyltransferase (213 aa).

The protein belongs to the ATP phosphoribosyltransferase family. Short subfamily. Heteromultimer composed of HisG and HisZ subunits.

It is found in the cytoplasm. The catalysed reaction is 1-(5-phospho-beta-D-ribosyl)-ATP + diphosphate = 5-phospho-alpha-D-ribose 1-diphosphate + ATP. It functions in the pathway amino-acid biosynthesis; L-histidine biosynthesis; L-histidine from 5-phospho-alpha-D-ribose 1-diphosphate: step 1/9. Catalyzes the condensation of ATP and 5-phosphoribose 1-diphosphate to form N'-(5'-phosphoribosyl)-ATP (PR-ATP). Has a crucial role in the pathway because the rate of histidine biosynthesis seems to be controlled primarily by regulation of HisG enzymatic activity. This chain is ATP phosphoribosyltransferase, found in Thermoanaerobacter pseudethanolicus (strain ATCC 33223 / 39E) (Clostridium thermohydrosulfuricum).